Here is a 420-residue protein sequence, read N- to C-terminus: Light-independent protochlorophyllide reductase subunit N (420 aa).

Cys-21, Cys-46, and Cys-103 together coordinate [4Fe-4S] cluster.

This sequence belongs to the BchN/ChlN family. Protochlorophyllide reductase is composed of three subunits; BchL, BchN and BchB. Forms a heterotetramer of two BchB and two BchN subunits. [4Fe-4S] cluster serves as cofactor.

It catalyses the reaction chlorophyllide a + oxidized 2[4Fe-4S]-[ferredoxin] + 2 ADP + 2 phosphate = protochlorophyllide a + reduced 2[4Fe-4S]-[ferredoxin] + 2 ATP + 2 H2O. The protein operates within porphyrin-containing compound metabolism; bacteriochlorophyll biosynthesis (light-independent). Its function is as follows. Component of the dark-operative protochlorophyllide reductase (DPOR) that uses Mg-ATP and reduced ferredoxin to reduce ring D of protochlorophyllide (Pchlide) to form chlorophyllide a (Chlide). This reaction is light-independent. The NB-protein (BchN-BchB) is the catalytic component of the complex. In Chlorobium phaeobacteroides (strain DSM 266 / SMG 266 / 2430), this protein is Light-independent protochlorophyllide reductase subunit N.